The chain runs to 303 residues: B1 kinase (303 aa).

This sequence belongs to the protein kinase superfamily. Ser/Thr protein kinase family. Poxviruses subfamily. Interacts with host JIP1; this interaction increases the amount of MAPK bound to JIP1 and subsequently increases the activity of transcription factors, such as JUN, that respond to these complexes. Interacts with protein OPG198; this interaction inhibits the repressive activity of OPG198 pseudokinase on viral replication factory formation. Requires Mg(2+) as cofactor. Autophosphorylated.

The protein localises to the virion. The protein resides in the host cytoplasm. It carries out the reaction L-seryl-[protein] + ATP = O-phospho-L-seryl-[protein] + ADP + H(+). It catalyses the reaction L-threonyl-[protein] + ATP = O-phospho-L-threonyl-[protein] + ADP + H(+). In terms of biological role, essential serine/threonine-protein kinase that plays different role in the viral life cycle. Phosphorylates the host small ribosomal protein RACK1 thereby customizing the ribosomes to a state optimal for viral mRNAs (which contain poly-A leaders) but not for host mRNAs. Facilitates viral DNA replication by inhibiting host BANF1, a cellular host defense responsive to foreign DNA. Phosphorylates host BANF1 on serine and threonine residues; this leads to BANF1 relocalization to the cytoplasm, loss of dimerization and impaired DNA binding activity. Indeed, BANF1 activity depends on its DNA-binding property which is blocked by VPK1-mediated phosphorylation. Required for viral intermediate genes expression, probably by inhibiting host BANF1. Modulates cellular responses via host JUN by two different mechanisms, either by direct phosphorylation or by modulation of upstream JIP1-MAPK complexes. Seems to participate in the accumulation/processing of late proteins and thus in virion maturation. In addition, inhibits B12 repressive activity on viral DNA replication via a phosphorylation-dependent mechanism. This chain is B1 kinase (OPG187), found in Cynomys gunnisoni (Gunnison's prairie dog).